The following is a 393-amino-acid chain: MTAPTTRKDLMIVNMGPQHPSMHGVLRLIVTLDGEDVVDCEPILGYLHRGMEKIAENRTIIQYLPYVTRWDYLATMFTEAITINGPEQLGNIQVPKRASYIRVIMLELSRIASHLLWLGPFMADIGAQTPFFYIFRERELIYDLFEAATGMRMMHNFFRIGGVAADLPYGWIDKCLDFCDYFLTGVAEYQKLITRNPIFLERVEGVGIIGRDEALNWGLSGPMLRASGIEWDLRKVDHYESYDEFDWQVQWQREGDSLARYLVRIGEMTESIKIIQQALEGIPGGPYENLEMRRFDRLKDPEWNDFEYRFISKKPSPTFELSKQELYVRVEAPKGELGIFMIGDQSVFPWRWKIRPPGFINLQILPQLVKRMKLADIMTILGSIDIIMGEVDR.

It belongs to the complex I 49 kDa subunit family. NDH is composed of at least 16 different subunits, 5 of which are encoded in the nucleus.

Its subcellular location is the plastid. The protein localises to the chloroplast thylakoid membrane. The catalysed reaction is a plastoquinone + NADH + (n+1) H(+)(in) = a plastoquinol + NAD(+) + n H(+)(out). It carries out the reaction a plastoquinone + NADPH + (n+1) H(+)(in) = a plastoquinol + NADP(+) + n H(+)(out). Its function is as follows. NDH shuttles electrons from NAD(P)H:plastoquinone, via FMN and iron-sulfur (Fe-S) centers, to quinones in the photosynthetic chain and possibly in a chloroplast respiratory chain. The immediate electron acceptor for the enzyme in this species is believed to be plastoquinone. Couples the redox reaction to proton translocation, and thus conserves the redox energy in a proton gradient. This Solanum bulbocastanum (Wild potato) protein is NAD(P)H-quinone oxidoreductase subunit H, chloroplastic.